The primary structure comprises 538 residues: Lipid scramblase CLPTM1L (538 aa).

At 1–10 (MWSGRSSFTS) the chain is on the cytoplasmic side. A helical membrane pass occupies residues 11–31 (LVVGVFVVYVVHTCWVMYGIV). Topologically, residues 32–284 (YTRPCSGHGR…VKGIFVDTNL (253 aa)) are extracellular. N-linked (GlcNAc...) asparagine glycans are attached at residues N91 and N101. Residues 285-305 (YFLALTFFVAAFHLLFDFLAF) form a helical membrane-spanning segment. Topologically, residues 306-324 (KNDISFWKKKKSMIGMSTK) are cytoplasmic. The chain crosses the membrane as a helical span at residues 325-341 (AVLWRCFSTVVIFLFLL). Residues 342-402 (DEQTSLPVLV…TEEYDAQAMK (61 aa)) are Extracellular-facing. Residues 403–423 (YLSYLLYPLCIGGAIYSLLNI) form a helical membrane-spanning segment. Over 424-428 (KYKSW) the chain is Cytoplasmic. Residues 429–449 (YSWLINSFVNGVYAFGFLFML) form a helical membrane-spanning segment. The Extracellular segment spans residues 450–538 (PQLFVNYKMK…DTPQRKPHTD (89 aa)).

It belongs to the CLPTM1 family.

It is found in the endoplasmic reticulum membrane. The catalysed reaction is a 6-(alpha-D-glucosaminyl)-1-(1,2-diacyl-sn-glycero-3-phospho)-1D-myo-inositol(in) = a 6-(alpha-D-glucosaminyl)-1-(1,2-diacyl-sn-glycero-3-phospho)-1D-myo-inositol(out). The enzyme catalyses 6-(alpha-D-glucosaminyl)-(1-octadecanoyl,2-(9Z)-octadecenoyl-sn-glycero-3-phospho)-1D-myo-inositol(in) = 6-(alpha-D-glucosaminyl)-(1-octadecanoyl,2-(9Z)-octadecenoyl-sn-glycero-3-phospho)-1D-myo-inositol(out). It catalyses the reaction a 1,2-diacyl-sn-glycero-3-phospho-(1D-myo-inositol)(in) = a 1,2-diacyl-sn-glycero-3-phospho-(1D-myo-inositol)(out). It carries out the reaction a 1,2-diacyl-sn-glycero-3-phosphocholine(in) = a 1,2-diacyl-sn-glycero-3-phosphocholine(out). The catalysed reaction is a 1,2-diacyl-sn-glycero-3-phosphoethanolamine(in) = a 1,2-diacyl-sn-glycero-3-phosphoethanolamine(out). Its function is as follows. Scramblase that mediates the translocation of glucosaminylphosphatidylinositol (alpha-D-GlcN-(1-6)-(1,2-diacyl-sn-glycero-3-phospho)-1D-myo-inositol, GlcN-PI) across the endoplasmic reticulum (ER) membrane, from the cytosolic leaflet to the luminal leaflet of the ER membrane, where it participates in the biosynthesis of glycosylphosphatidylinositol (GPI). GPI is a lipid glycoconjugate involved in post-translational modification of proteins. Can also translocate 1,2-diacyl-sn-glycero-3-phospho-(1D-myo-inositol) (phosphatidylinositol or PI), as well as several other phospholipids (1,2-diacyl-sn-glycero-3-phosphocholine, 1,2-diacyl-sn-glycero-3-phosphoethanolamine), and N-acetylglucosaminylphosphatidylinositol (GlcNAc-PI) in vitro. The sequence is that of Lipid scramblase CLPTM1L (CLPTM1L) from Bos taurus (Bovine).